The sequence spans 83 residues: Disintegrin isoform D-3 (83 aa).

The 82-residue stretch at 2–83 folds into the Disintegrin domain; sequence PPVCGNELLE…GKSSDCPWNH (82 aa). 7 disulfides stabilise this stretch: C5/C24, C16/C34, C18/C29, C28/C51, C42/C48, C47/C72, and C60/C79. The Cell attachment site signature appears at 64-66; sequence RGD.

This sequence belongs to the venom metalloproteinase (M12B) family. P-II subfamily. P-IIa sub-subfamily. In terms of assembly, monomer (disintegrin). Expressed by the venom gland.

The protein localises to the secreted. Its function is as follows. Inhibits fibrinogen interaction with platelets. Acts by binding to alpha-IIb/beta-3 (ITGA2B/ITGB3) on the platelet surface and inhibits aggregation induced by ADP, thrombin, platelet-activating factor and collagen. The polypeptide is Disintegrin isoform D-3 (Bitis arietans (African puff adder)).